We begin with the raw amino-acid sequence, 320 residues long: Acetyl-coenzyme A carboxylase carboxyl transferase subunit alpha (320 aa).

The region spanning 33–294 (AFDGEIESLR…GDAVEEELKA (262 aa)) is the CoA carboxyltransferase C-terminal domain.

This sequence belongs to the AccA family. In terms of assembly, acetyl-CoA carboxylase is a heterohexamer composed of biotin carboxyl carrier protein (AccB), biotin carboxylase (AccC) and two subunits each of ACCase subunit alpha (AccA) and ACCase subunit beta (AccD).

The protein localises to the cytoplasm. It catalyses the reaction N(6)-carboxybiotinyl-L-lysyl-[protein] + acetyl-CoA = N(6)-biotinyl-L-lysyl-[protein] + malonyl-CoA. It participates in lipid metabolism; malonyl-CoA biosynthesis; malonyl-CoA from acetyl-CoA: step 1/1. In terms of biological role, component of the acetyl coenzyme A carboxylase (ACC) complex. First, biotin carboxylase catalyzes the carboxylation of biotin on its carrier protein (BCCP) and then the CO(2) group is transferred by the carboxyltransferase to acetyl-CoA to form malonyl-CoA. This Phenylobacterium zucineum (strain HLK1) protein is Acetyl-coenzyme A carboxylase carboxyl transferase subunit alpha.